A 600-amino-acid chain; its full sequence is Adenine deaminase 2 (600 aa).

Belongs to the metallo-dependent hydrolases superfamily. Adenine deaminase family. It depends on Mn(2+) as a cofactor.

The catalysed reaction is adenine + H2O + H(+) = hypoxanthine + NH4(+). In Bradyrhizobium sp. (strain ORS 278), this protein is Adenine deaminase 2.